Consider the following 284-residue polypeptide: Diaminopimelate epimerase (284 aa).

Positions 13 and 70 each coordinate substrate. C79 functions as the Proton donor in the catalytic mechanism. Substrate is bound by residues 80–81 (GN), N167, N200, and 218–219 (ER). C227 serves as the catalytic Proton acceptor. A substrate-binding site is contributed by 228–229 (GT).

The protein belongs to the diaminopimelate epimerase family. As to quaternary structure, homodimer.

The protein localises to the cytoplasm. The enzyme catalyses (2S,6S)-2,6-diaminopimelate = meso-2,6-diaminopimelate. It participates in amino-acid biosynthesis; L-lysine biosynthesis via DAP pathway; DL-2,6-diaminopimelate from LL-2,6-diaminopimelate: step 1/1. Catalyzes the stereoinversion of LL-2,6-diaminopimelate (L,L-DAP) to meso-diaminopimelate (meso-DAP), a precursor of L-lysine and an essential component of the bacterial peptidoglycan. The protein is Diaminopimelate epimerase of Prochlorococcus marinus (strain NATL1A).